The sequence spans 263 residues: Cell division protein DivIB (263 aa).

Over 1-32 the chain is Cytoplasmic; sequence MNPGQDREKIVNIEERIPKIKEQRKQKANRRL. A helical membrane pass occupies residues 33–53; that stretch reads ISFIMLFFIMVLIIVYLQTPI. Residues 51 to 123 form an alpha region; sequence TPISKVSTIS…NKINIAIEEY (73 aa). The POTRA domain occupies 54–123; the sequence is SKVSTISVTG…NKINIAIEEY (70 aa). Over 54–263 the chain is Extracellular; it reads SKVSTISVTG…DKAAKKEDEN (210 aa). Positions 124 to 251 are beta; the sequence is KAIAYLEKDD…EVATYFEEFG (128 aa). A gamma region spans residues 229-263; it reads SQLSSNKKGIIHLEVATYFEEFGKNDKAAKKEDEN.

It belongs to the FtsQ/DivIB family. DivIB subfamily. As to quaternary structure, interacts with FtsL, DivIC and PBP-2B.

It is found in the cell membrane. Cell division protein that may be involved in stabilizing or promoting the assembly of the division complex. Plays an essential role in division at high temperatures, maybe by protecting FtsL from degradation or by promoting formation of the FtsL-DivIC complex. May modulate the transpeptidase activity of PBP-2B. Also required for efficient sporulation at all temperatures. Could be directly involved in the engulfment process or be required to form a sporulation septum competent for engulfment. Influences the Spo0J/Soj system of chromosome segregation. The chain is Cell division protein DivIB from Bacillus subtilis (strain 168).